A 355-amino-acid polypeptide reads, in one-letter code: Agamous-like MADS-box protein AGL81 (355 aa).

Residues 1 to 22 form a disordered region; the sequence is MAIRSLPSSSRCSSSSSSSSYS. One can recognise an MADS-box domain in the interval 26–68; the sequence is TSLSNRLETIFKKASELCTLCDIEACVIYYGPDGELKTWPPER. Residues 162 to 174 show a composition bias toward basic and acidic residues; sequence VESQKHKETKPDH. The segment at 162 to 186 is disordered; the sequence is VESQKHKETKPDHQSLASSSLNHQT. Polar residues predominate over residues 176-186; the sequence is SLASSSLNHQT.

In terms of assembly, interacts with MEE14/CBP1.

The protein resides in the nucleus. Probable transcription factor that may function in the maintenance of the proper function of the central cell in pollen tube attraction. The sequence is that of Agamous-like MADS-box protein AGL81 from Arabidopsis thaliana (Mouse-ear cress).